A 601-amino-acid polypeptide reads, in one-letter code: Cdc42-interacting protein 4 (601 aa).

Positions 1 to 117 are required for translocation to the plasma membrane in response to insulin, podosome formation and interaction with AKAP9 and microtubules; sequence MDWGTELWDQ…EMKQERKMHF (117 aa). An F-BAR domain is found at 1-264; the sequence is MDWGTELWDQ…AANAVDPKND (264 aa). The stretch at 67 to 259 forms a coiled coil; that stretch reads FSQQQSFVQI…EGMKVAANAV (193 aa). Disordered regions lie at residues 280-358, 390-420, and 478-543; these read GDVE…GRDP, DFSH…EVDQ, and NRGD…SPIG. A compositionally biased stretch (polar residues) spans 289 to 302; that stretch reads QPMNRAPSDSSLGT. Positions 293–537 are interaction with CDC42; sequence RAPSDSSLGT…TEFDEDFEEE (245 aa). The interval 293–601 is interaction with PDE6G; that stretch reads RAPSDSSLGT…PTSYLRVTLN (309 aa). Residues S296, S298, and S299 each carry the phosphoserine modification. Positions 314–329 are enriched in basic residues; sequence GRSRTKRWPFGKKNKP. At S335 the chain carries Phosphoserine. The segment covering 336–346 has biased composition (low complexity); sequence PLGGPVPSALP. S351 is modified (phosphoserine). Residues 388–481 are a coiled coil; that stretch reads TEDFSHLPPE…ESRVLSNRGD (94 aa). The REM-1 domain occupies 393–470; that stretch reads HLPPEQQRKR…VQKYEAWLAE (78 aa). The segment covering 407–420 has biased composition (basic and acidic residues); it reads LEERSRELQKEVDQ. Residues 471 to 601 form a required for interaction with FASLG and localization to lysosomes region; sequence AESRVLSNRG…PTSYLRVTLN (131 aa). S482 is subject to Phosphoserine. The segment at 487–541 is interaction with DNM2 and WASL; the sequence is ARPPDPPTSAPPDSSSNSASQDTKESSEEPPSEESQDTPIYTEFDEDFEEEPTSP. Positions 497-506 are enriched in low complexity; that stretch reads PPDSSSNSAS. Acidic residues predominate over residues 529-538; that stretch reads EFDEDFEEEP. An interaction with DNM1 and WASL region spans residues 529–601; that stretch reads EFDEDFEEEP…PTSYLRVTLN (73 aa). A required for podosome formation region spans residues 538–601; that stretch reads PTSPIGHCVA…PTSYLRVTLN (64 aa). The SH3 domain occupies 540–601; sequence SPIGHCVAIY…PTSYLRVTLN (62 aa). An interaction with WAS region spans residues 544-601; sequence HCVAIYHFEGSSEGTISMAEGEDLSLMEEDKGDGWTRVRRKEGGEGYVPTSYLRVTLN. The tract at residues 546–601 is interaction with ARHGAP17, DAAM1, DIAPH1 and DIAPH2; the sequence is VAIYHFEGSSEGTISMAEGEDLSLMEEDKGDGWTRVRRKEGGEGYVPTSYLRVTLN.

This sequence belongs to the FNBP1 family. As to quaternary structure, homodimerizes, the dimers can polymerize end-to-end to form filamentous structures. Interacts with AKAP9, ARHGAP17, DAAM1, DIAPH1, DIAPH2, DNM1, FASLG/FASL, GAPVD1, LYN, microtubules, PDE6G, SRC and WAS/WASP. Interacts with the ligand binding domain of the thyroid receptor (TR) in the presence of thyroid hormone. May interact with CTNNB1 and HD/HTT. Interacts specifically with GTP-bound CDC42 and RHOQ. Interacts with DNM2 and WASL. Tyrosine phosphorylated. Also phosphorylated by PKA.

It localises to the cytoplasm. Its subcellular location is the cytoskeleton. It is found in the cell cortex. The protein localises to the lysosome. The protein resides in the golgi apparatus. It localises to the cell membrane. Its subcellular location is the cell projection. It is found in the phagocytic cup. In terms of biological role, required to coordinate membrane tubulation with reorganization of the actin cytoskeleton during endocytosis. Also acts as a link between CDC42 signaling and regulation of the actin cytoskeleton. Binds to lipids such as phosphatidylinositol 4,5-bisphosphate and phosphatidylserine and promotes membrane invagination and the formation of tubules. Also enhances actin polymerization in the vicinity of membrane tubules by recruiting WASL/N-WASP which in turn activates the Arp2/3 complex. Actin polymerization and dynamin may promote the fission of membrane tubules to form endocytic vesicles. Required for the formation of podosomes, actin-rich adhesion structures specific to monocyte-derived cells. Required for translocation of GLUT4 to the plasma membrane in response to insulin signaling. May be required for the lysosomal retention of FASLG/FASL. The sequence is that of Cdc42-interacting protein 4 (TRIP10) from Pongo abelii (Sumatran orangutan).